Consider the following 486-residue polypeptide: Citrate synthase 3, mitochondrial (486 aa).

The N-terminal 23 residues, M1–K23, are a transit peptide targeting the mitochondrion. Catalysis depends on residues H315, H361, and D419. Positions N484–L486 match the Microbody targeting signal motif.

This sequence belongs to the citrate synthase family.

It is found in the mitochondrion. It carries out the reaction oxaloacetate + acetyl-CoA + H2O = citrate + CoA + H(+). It functions in the pathway carbohydrate metabolism; tricarboxylic acid cycle; isocitrate from oxaloacetate: step 1/2. Dual specificity mitochondrial citrate and methylcitrate synthase with similar catalytic efficiency with both acetyl-CoA and propionyl-CoA. This Saccharomyces cerevisiae (strain ATCC 204508 / S288c) (Baker's yeast) protein is Citrate synthase 3, mitochondrial.